Consider the following 222-residue polypeptide: Uridine kinase (222 aa).

13 to 20 (GGSGAGKT) is a binding site for ATP.

The protein belongs to the uridine kinase family.

It localises to the cytoplasm. It carries out the reaction uridine + ATP = UMP + ADP + H(+). The enzyme catalyses cytidine + ATP = CMP + ADP + H(+). Its pathway is pyrimidine metabolism; CTP biosynthesis via salvage pathway; CTP from cytidine: step 1/3. It participates in pyrimidine metabolism; UMP biosynthesis via salvage pathway; UMP from uridine: step 1/1. This is Uridine kinase from Chlamydia pneumoniae (Chlamydophila pneumoniae).